The following is a 471-amino-acid chain: Argininosuccinate lyase (471 aa).

The protein belongs to the lyase 1 family. Argininosuccinate lyase subfamily.

It localises to the cytoplasm. The catalysed reaction is 2-(N(omega)-L-arginino)succinate = fumarate + L-arginine. The protein operates within amino-acid biosynthesis; L-arginine biosynthesis; L-arginine from L-ornithine and carbamoyl phosphate: step 3/3. The polypeptide is Argininosuccinate lyase (Cereibacter sphaeroides (strain ATCC 17025 / ATH 2.4.3) (Rhodobacter sphaeroides)).